The primary structure comprises 901 residues: ABC transporter A family member 8 (901 aa).

7 helical membrane-spanning segments follow: residues 34–54 (LITIPFFLCLLLLVIQMLFDT), 315–335 (IASLIGPLFFTWVILLLFPVI), 369–389 (FLLISILYMLCFAIFGSLIGL), 402–422 (VFFFICINLQISVAFLASAMF), 427–447 (TATVIAYIYVFGTGLLGIFLF), 460–477 (WIIAMELYPGFSLYRGLY), and 508–528 (CIMLIEWLLLLGLAYYIDQII). In terms of domain architecture, ABC transporter spans 586–823 (VLCNNLKKVY…YGGSYVLTVT (238 aa)). 624–631 (GPNGAGKT) provides a ligand contact to ATP.

This sequence belongs to the ABC transporter superfamily. ABCA family. CPR flippase (TC 3.A.1.211) subfamily.

The protein localises to the membrane. This is ABC transporter A family member 8 (ABCA8) from Arabidopsis thaliana (Mouse-ear cress).